The sequence spans 745 residues: MALPKTIMAFIAFISFLVSTTFAVDVFSTTNVVTYWGQGHDQKRLSHYCQQAEHDIIVIGFVNVFPDQGKGGWPGTNFGNQCFMGTYITPEGEETELLSSCHKIIEDIPICKAAGKTIMLSLGGQAVDGSKTYSVKTRQSAVYFADFLWRAFGPVSPEWDGPRPFGDNVIDGFDFDIEANGGANYEYMVERLRSNFATDSSRQYYLSAAPQCVLPDGNLGNVISSSAFDFIFVQFYNTPSCSAFNWAQNPSKSGFTFDSWVQFIRKGASRNAKLFIGLVGDHTRVSPHGEYTKDDSNYLALPDADKLIKAYMNKYRANFGGVMIWDALTSDENKLVTGTYSSNIKRLLLNNDPSRPTTTSKTMSSTKTSMSTTTSKYTVTTSTISSTSKISSSTWSMPTMTTSTRTTSSTATRSSTIVTPSTSPNPTTSTSTTSGHQNTTATTTEIETQTSKTFITTTSIWSSGTGIGTCTGIPTITTTPRYPNATFTSDTTGSPTMSDTTITLSVTSSMHQISDTTTTIPTFSTTPIQTSDISLSMPSGTTTSKHQSSGITIPGPPHMSTTIVPASPTKPGHSTTTAIVTTTFTSVCPTGITTVTTTYTTIYCPEATPMPTAGNPPPPPGMEWTTIVTTCTKCASTSAIMTVTYPVTVPSEPMTPTQVPGTLPPPGAPGTGSGIPPPKTPSNEPGSPGTLTGIFPPKPTMSVPPEMGGNGGDRTPVYTGGAGVVSPSFSVVVIVLGSIVYHIMQ.

The N-terminal stretch at 1 to 23 is a signal peptide; sequence MALPKTIMAFIAFISFLVSTTFA. The GH18 domain occupies 30 to 351; the sequence is TNVVTYWGQG…SNIKRLLLNN (322 aa). E178 serves as the catalytic Proton donor. 2 disordered regions span residues 351-372 and 395-446; these read NDPS…SMST and WSMP…TTEI. The segment covering 357-372 has biased composition (low complexity); sequence TTTSKTMSSTKTSMST. 2 N-linked (GlcNAc...) asparagine glycosylation sites follow: N438 and N484. Positions 651-715 are disordered; that stretch reads SEPMTPTQVP…EMGGNGGDRT (65 aa). G720 carries GPI-anchor amidated glycine lipidation. A propeptide spans 721–745 (removed in mature form); sequence GAGVVSPSFSVVVIVLGSIVYHIMQ.

The protein belongs to the glycosyl hydrolase 18 family. Chitinase class III subfamily.

It localises to the cell membrane. The protein localises to the secreted. The protein resides in the cell wall. It catalyses the reaction Random endo-hydrolysis of N-acetyl-beta-D-glucosaminide (1-&gt;4)-beta-linkages in chitin and chitodextrins.. In terms of biological role, GPI-anchored chitinase involved in the degradation of chitin, a component of the cell walls of fungi and exoskeletal elements of some animals (including worms and arthropods). Required to reshape the cell wall at the sites where cell wall remodeling and/or cell wall maturation actively take place such as sites of conidia formation. This Arthroderma benhamiae (strain ATCC MYA-4681 / CBS 112371) (Trichophyton mentagrophytes) protein is Probable endochitinase ARB_07371.